Consider the following 1450-residue polypeptide: DNA-directed RNA polymerase RPB1 homolog (1450 aa).

It belongs to the RNA polymerase beta' chain family. As to quaternary structure, part of the viral DNA-directed RNA polymerase that consists of 8 polII-like subunits (RPB1, RPB2, RPB3, RPB5, RPB6, RPB7, RPB9, RPB10), a capping enzyme and a termination factor.

It is found in the virion. The enzyme catalyses RNA(n) + a ribonucleoside 5'-triphosphate = RNA(n+1) + diphosphate. Functionally, catalytic component of the DNA-directed RNA polymerase (RNAP) that catalyzes the transcription in the cytoplasm of viral DNA into RNA using the four ribonucleoside triphosphates as substrates. Forms the polymerase active center together with RPB2. Part of the core element with the central large cleft, the clamp element that moves to open and close the cleft and the jaws that are thought to grab the incoming DNA template. The chain is DNA-directed RNA polymerase RPB1 homolog from Ornithodoros (relapsing fever ticks).